We begin with the raw amino-acid sequence, 241 residues long: Octanoyltransferase (241 aa).

Residues lysine 50–isoleucine 238 enclose the BPL/LPL catalytic domain. Substrate is bound by residues arginine 89–histidine 96, alanine 169–glycine 171, and glycine 182–serine 184. Cysteine 200 (acyl-thioester intermediate) is an active-site residue.

The protein belongs to the LipB family.

The protein localises to the cytoplasm. It catalyses the reaction octanoyl-[ACP] + L-lysyl-[protein] = N(6)-octanoyl-L-lysyl-[protein] + holo-[ACP] + H(+). It functions in the pathway protein modification; protein lipoylation via endogenous pathway; protein N(6)-(lipoyl)lysine from octanoyl-[acyl-carrier-protein]: step 1/2. Catalyzes the transfer of endogenously produced octanoic acid from octanoyl-acyl-carrier-protein onto the lipoyl domains of lipoate-dependent enzymes. Lipoyl-ACP can also act as a substrate although octanoyl-ACP is likely to be the physiological substrate. In Bartonella bacilliformis (strain ATCC 35685 / KC583 / Herrer 020/F12,63), this protein is Octanoyltransferase.